Reading from the N-terminus, the 442-residue chain is tRNA modification GTPase MnmE (442 aa).

(6S)-5-formyl-5,6,7,8-tetrahydrofolate contacts are provided by Arg-24, Glu-82, and Lys-120. One can recognise a TrmE-type G domain in the interval 217-367 (GLHIVITGEP…LISLIKEKAE (151 aa)). Residues 227-232 (NVGKST), 246-252 (SEYAGTT), and 271-274 (DTAG) each bind GTP. Mg(2+) contacts are provided by Ser-231 and Thr-252. A (6S)-5-formyl-5,6,7,8-tetrahydrofolate-binding site is contributed by Lys-442.

The protein belongs to the TRAFAC class TrmE-Era-EngA-EngB-Septin-like GTPase superfamily. TrmE GTPase family. In terms of assembly, homodimer. Heterotetramer of two MnmE and two MnmG subunits. The cofactor is K(+).

The protein localises to the cytoplasm. In terms of biological role, exhibits a very high intrinsic GTPase hydrolysis rate. Involved in the addition of a carboxymethylaminomethyl (cmnm) group at the wobble position (U34) of certain tRNAs, forming tRNA-cmnm(5)s(2)U34. The chain is tRNA modification GTPase MnmE from Wolbachia sp. subsp. Drosophila simulans (strain wRi).